A 182-amino-acid polypeptide reads, in one-letter code: Small ribosomal subunit protein uS4 (182 aa).

Disordered stretches follow at residues 1–23 (MGHP…ADRI) and 158–182 (SSVA…KDEE). In terms of domain architecture, S4 RNA-binding spans 103–170 (RRLQSLVFKR…AKQFETQETE (68 aa)). The segment covering 167–182 (QETEEVAAEEEPKDEE) has biased composition (acidic residues).

It belongs to the universal ribosomal protein uS4 family. As to quaternary structure, part of the 30S ribosomal subunit. Contacts protein S5. The interaction surface between S4 and S5 is involved in control of translational fidelity.

Its function is as follows. One of the primary rRNA binding proteins, it binds directly to 16S rRNA where it nucleates assembly of the body of the 30S subunit. Functionally, with S5 and S12 plays an important role in translational accuracy. The sequence is that of Small ribosomal subunit protein uS4 from Methanosphaera stadtmanae (strain ATCC 43021 / DSM 3091 / JCM 11832 / MCB-3).